Consider the following 197-residue polypeptide: Beta-crystallin A2 (197 aa).

The interval M1 to P11 is N-terminal arm. Beta/gamma crystallin 'Greek key' domains lie at A12–N52 and G53–L99. The connecting peptide stretch occupies residues C100–D105. Beta/gamma crystallin 'Greek key' domains are found at residues S106–S147 and G148–Q196.

Belongs to the beta/gamma-crystallin family. As to quaternary structure, homo/heterodimer, or complexes of higher-order. The structure of beta-crystallin oligomers seems to be stabilized through interactions between the N-terminal arms.

Crystallins are the dominant structural components of the vertebrate eye lens. This Homo sapiens (Human) protein is Beta-crystallin A2 (CRYBA2).